Consider the following 221-residue polypeptide: Ribonuclease T (221 aa).

The region spanning 20-194 (VVIDVETAGF…YDTERTAELF (175 aa)) is the Exonuclease domain. Mg(2+) contacts are provided by aspartate 23, glutamate 25, histidine 181, and aspartate 186. Residue histidine 181 is the Proton donor/acceptor of the active site.

It belongs to the RNase T family. As to quaternary structure, homodimer. It depends on Mg(2+) as a cofactor.

In terms of biological role, trims short 3' overhangs of a variety of RNA species, leaving a one or two nucleotide 3' overhang. Responsible for the end-turnover of tRNA: specifically removes the terminal AMP residue from uncharged tRNA (tRNA-C-C-A). Also appears to be involved in tRNA biosynthesis. The sequence is that of Ribonuclease T from Shewanella frigidimarina (strain NCIMB 400).